The primary structure comprises 209 residues: Large ribosomal subunit protein uL3 (209 aa).

Positions threonine 133–proline 152 are disordered. Glutamine 150 carries the post-translational modification N5-methylglutamine.

The protein belongs to the universal ribosomal protein uL3 family. As to quaternary structure, part of the 50S ribosomal subunit. Forms a cluster with proteins L14 and L19. In terms of processing, methylated by PrmB.

One of the primary rRNA binding proteins, it binds directly near the 3'-end of the 23S rRNA, where it nucleates assembly of the 50S subunit. This Shigella sonnei (strain Ss046) protein is Large ribosomal subunit protein uL3.